Reading from the N-terminus, the 255-residue chain is Ribosomal RNA small subunit methyltransferase A (255 aa).

S-adenosyl-L-methionine is bound by residues Asn12, Leu14, Gly39, Glu60, Asp84, and Asn106.

Belongs to the class I-like SAM-binding methyltransferase superfamily. rRNA adenine N(6)-methyltransferase family. RsmA subfamily.

It localises to the cytoplasm. It catalyses the reaction adenosine(1518)/adenosine(1519) in 16S rRNA + 4 S-adenosyl-L-methionine = N(6)-dimethyladenosine(1518)/N(6)-dimethyladenosine(1519) in 16S rRNA + 4 S-adenosyl-L-homocysteine + 4 H(+). Specifically dimethylates two adjacent adenosines (A1518 and A1519) in the loop of a conserved hairpin near the 3'-end of 16S rRNA in the 30S particle. May play a critical role in biogenesis of 30S subunits. The polypeptide is Ribosomal RNA small subunit methyltransferase A (Herminiimonas arsenicoxydans).